Here is a 168-residue protein sequence, read N- to C-terminus: Type-2 ice-structuring protein (168 aa).

Residues 1-17 form the signal peptide; it reads MLTVSLLVCAMMALTQA. Positions 18–34 are excised as a propeptide; that stretch reads DHDGVLKGTATEAGEVS. Disulfide bonds link cysteine 45–cysteine 56, cysteine 73–cysteine 163, cysteine 107–cysteine 138, cysteine 127–cysteine 149, and cysteine 139–cysteine 155. The 113-residue stretch at 52–164 folds into the C-type lectin domain; it reads HGQRCFYSEA…CPASHASICA (113 aa).

Its subcellular location is the secreted. In terms of biological role, has antifreeze activity to protect fish blood from freezing at subzero sea water temperatures. Binds to ice crystals and inhibits their growth. The thermal hysteresis (TH) activity, the ability to lower the blood freezing point, is approximately 0.45 degrees Celsius at 0.15 mM for this protein. In Brachyopsis segaliensis (Sea poacher), this protein is Type-2 ice-structuring protein.